The sequence spans 37 residues: Cytochrome b6-f complex subunit 5 (37 aa).

The helical transmembrane segment at 5–25 (LLSGIVLGLIPITLAGLFVTA) threads the bilayer.

It belongs to the PetG family. The 4 large subunits of the cytochrome b6-f complex are cytochrome b6, subunit IV (17 kDa polypeptide, PetD), cytochrome f and the Rieske protein, while the 4 small subunits are PetG, PetL, PetM and PetN. The complex functions as a dimer.

The protein localises to the plastid. Its subcellular location is the chloroplast thylakoid membrane. Functionally, component of the cytochrome b6-f complex, which mediates electron transfer between photosystem II (PSII) and photosystem I (PSI), cyclic electron flow around PSI, and state transitions. PetG is required for either the stability or assembly of the cytochrome b6-f complex. The polypeptide is Cytochrome b6-f complex subunit 5 (Angiopteris evecta (Mule's foot fern)).